Reading from the N-terminus, the 293-residue chain is UPF0282 protein MK0213 (293 aa).

It belongs to the UPF0282 family.

The chain is UPF0282 protein MK0213 from Methanopyrus kandleri (strain AV19 / DSM 6324 / JCM 9639 / NBRC 100938).